A 275-amino-acid chain; its full sequence is HUWE1-associated protein modifying stress responses 1 (275 aa).

Residues 32–44 (AEQDEQLPPELQE) show a composition bias toward acidic residues. The segment at 32–51 (AEQDEQLPPELQEEAAAAAQ) is disordered. The tract at residues 80-152 (QQPGLSLWVP…LISFLCGKVP (73 aa)) is HUWE1-binding and HAPSTR1 oligomerization (HBO) domain. Disordered stretches follow at residues 155–181 (RNSR…SSVE), 204–227 (SVRS…RRRN), and 250–275 (GTRK…NRMI). S167 carries the post-translational modification Phosphoserine. Positions 172–181 (TSTETSSSVE) are enriched in low complexity. A compositionally biased stretch (polar residues) spans 204–216 (SVRSSTPGSPTHV). S212 carries the post-translational modification Phosphoserine.

The protein belongs to the HAPSTR1 family. In terms of assembly, homooligomer. Heterooligomer with HAPSTR2; the interaction is direct and stabilizes HAPSTR1. Interacts with HUWE1. In terms of processing, ubiquitinated by HUWE1. Promotes HAPSTR1 degradation through polyubiquitination.

The protein localises to the nucleus. It is found in the cytoplasm. In terms of biological role, acts as a central player within a network of stress response pathways promoting cellular adaptability. The E3 ligase HUWE1 assists HAPSTR1 in controlling stress signaling and in turn, HUWE1 feeds back to promote the degradation of HAPSTR1. HAPSTR1 represents a central coordination mechanism for stress response programs. Functions as a negative regulator of TP53/P53 in the cellular response to telomere erosion and probably also DNA damage. May attenuate p53/TP53 activation through the E3 ubiquitin ligase HUWE1. The protein is HUWE1-associated protein modifying stress responses 1 of Homo sapiens (Human).